Here is a 327-residue protein sequence, read N- to C-terminus: Aspartate--ammonia ligase (327 aa).

The protein belongs to the class-II aminoacyl-tRNA synthetase family. AsnA subfamily.

The protein resides in the cytoplasm. It carries out the reaction L-aspartate + NH4(+) + ATP = L-asparagine + AMP + diphosphate + H(+). Its pathway is amino-acid biosynthesis; L-asparagine biosynthesis; L-asparagine from L-aspartate (ammonia route): step 1/1. This is Aspartate--ammonia ligase from Bacillus anthracis (strain A0248).